Consider the following 57-residue polypeptide: UPF0391 membrane protein Xaut_1725 (57 aa).

The next 2 membrane-spanning stretches (helical) occupy residues 4 to 24 (WAVT…GGIA) and 30 to 50 (IAKI…VAGL).

This sequence belongs to the UPF0391 family.

The protein localises to the cell membrane. In Xanthobacter autotrophicus (strain ATCC BAA-1158 / Py2), this protein is UPF0391 membrane protein Xaut_1725.